A 203-amino-acid polypeptide reads, in one-letter code: Recombination protein RecR (203 aa).

Residues 57–72 form a C4-type zinc finger; the sequence is CARCNTFSETELCVLC. The Toprim domain maps to 80–175; it reads DVLCVVEMPA…SVSRIARGLP (96 aa).

It belongs to the RecR family.

Functionally, may play a role in DNA repair. It seems to be involved in an RecBC-independent recombinational process of DNA repair. It may act with RecF and RecO. In Laribacter hongkongensis (strain HLHK9), this protein is Recombination protein RecR.